Reading from the N-terminus, the 220-residue chain is Transcriptional regulatory protein SpaR (220 aa).

Residues 3 to 115 (KILAVDDEKD…ELSARVNAHL (113 aa)) enclose the Response regulatory domain. Aspartate 51 is subject to 4-aspartylphosphate. The ompR/PhoB-type DNA-binding region spans 124–220 (QSKRVISGFL…TVWGVGYKWE (97 aa)).

In terms of processing, phosphorylated by SpaK.

The protein resides in the cytoplasm. Member of the two-component regulatory system SpaK/SpaR involved in the regulation of the biosynthesis of lantibiotic subtilin. SpaR may function as a regulatory protein. This chain is Transcriptional regulatory protein SpaR (spaR), found in Bacillus subtilis.